We begin with the raw amino-acid sequence, 245 residues long: 8-amino-3,8-dideoxy-manno-octulosonate cytidylyltransferase (245 aa).

The protein belongs to the KdsB family.

The protein resides in the cytoplasm. The enzyme catalyses 8-amino-3,8-dideoxy-alpha-D-manno-octulosonate + CTP = CMP-8-amino-3,8-dideoxy-alpha-D-manno-oct-2-ulosonate + diphosphate. It functions in the pathway bacterial outer membrane biogenesis; lipopolysaccharide biosynthesis. Activates KDO8N (a required 8-carbon sugar) for incorporation into bacterial lipopolysaccharide in the Shewanella genus. In Shewanella oneidensis (strain ATCC 700550 / JCM 31522 / CIP 106686 / LMG 19005 / NCIMB 14063 / MR-1), this protein is 8-amino-3,8-dideoxy-manno-octulosonate cytidylyltransferase.